Here is a 160-residue protein sequence, read N- to C-terminus: Ribosomal RNA large subunit methyltransferase H (160 aa).

Residues Leu-76, Gly-108, and 127 to 132 (LGELTW) each bind S-adenosyl-L-methionine.

The protein belongs to the RNA methyltransferase RlmH family. In terms of assembly, homodimer.

It is found in the cytoplasm. The enzyme catalyses pseudouridine(1915) in 23S rRNA + S-adenosyl-L-methionine = N(3)-methylpseudouridine(1915) in 23S rRNA + S-adenosyl-L-homocysteine + H(+). Specifically methylates the pseudouridine at position 1915 (m3Psi1915) in 23S rRNA. The chain is Ribosomal RNA large subunit methyltransferase H from Brucella anthropi (strain ATCC 49188 / DSM 6882 / CCUG 24695 / JCM 21032 / LMG 3331 / NBRC 15819 / NCTC 12168 / Alc 37) (Ochrobactrum anthropi).